Reading from the N-terminus, the 716-residue chain is Zinc finger protein 840 (716 aa).

Residues 42-113 enclose the KRAB domain; that stretch reads VRFRDVAVVF…EREVTGDPCP (72 aa). 18 C2H2-type zinc fingers span residues 151–173, 207–229, 235–257, 277–299, 305–327, 333–355, 361–383, 389–411, 417–439, 445–467, 473–495, 501–523, 549–571, 577–599, 605–627, 633–655, 661–683, and 689–711; these read YECD…QKIH, FECN…QSMH, YKCD…QRFH, FSCN…LLIH, YTCN…QRTH, HKCD…QKTH, FSCN…QQIH, FICS…KGTH, YQCT…QKTH, FACN…KKIH, YECG…KKIH, FVCN…QRTH, FPCN…QQIH, FTCN…KKIH, and FVCN…QITH. A disordered region spans residues 515 to 548; sequence KLSRHQRTHNKKENSSKSVSNLNKHQKTHAGEKP.

Belongs to the krueppel C2H2-type zinc-finger protein family.

It localises to the nucleus. In terms of biological role, may be involved in transcriptional regulation. The chain is Zinc finger protein 840 (ZNF840P) from Homo sapiens (Human).